The chain runs to 464 residues: NADH-quinone oxidoreductase subunit N 1 (464 aa).

14 helical membrane-spanning segments follow: residues I6–L26, F33–N53, V65–L85, Y98–S118, A122–F142, Y155–A175, F192–F212, I237–W257, Y259–Q279, L285–D305, L312–I332, L356–F376, A401–G421, and F436–L456.

Belongs to the complex I subunit 2 family. NDH-1 is composed of 14 different subunits. Subunits NuoA, H, J, K, L, M, N constitute the membrane sector of the complex.

The protein resides in the cell inner membrane. The enzyme catalyses a quinone + NADH + 5 H(+)(in) = a quinol + NAD(+) + 4 H(+)(out). Functionally, NDH-1 shuttles electrons from NADH, via FMN and iron-sulfur (Fe-S) centers, to quinones in the respiratory chain. The immediate electron acceptor for the enzyme in this species is believed to be ubiquinone. Couples the redox reaction to proton translocation (for every two electrons transferred, four hydrogen ions are translocated across the cytoplasmic membrane), and thus conserves the redox energy in a proton gradient. The protein is NADH-quinone oxidoreductase subunit N 1 of Aquifex aeolicus (strain VF5).